Reading from the N-terminus, the 321-residue chain is Malate dehydrogenase (321 aa).

NAD(+)-binding positions include 10–15 (GAGQIG) and D34. Substrate is bound by residues R83 and R89. NAD(+)-binding positions include N96 and 119 to 121 (ITN). Substrate is bound by residues N121 and R152. The active-site Proton acceptor is the H176.

This sequence belongs to the LDH/MDH superfamily. MDH type 3 family.

It catalyses the reaction (S)-malate + NAD(+) = oxaloacetate + NADH + H(+). Its function is as follows. Catalyzes the reversible oxidation of malate to oxaloacetate. This is Malate dehydrogenase from Methylocella silvestris (strain DSM 15510 / CIP 108128 / LMG 27833 / NCIMB 13906 / BL2).